The chain runs to 118 residues: Large ribosomal subunit protein bL19 (118 aa).

Belongs to the bacterial ribosomal protein bL19 family.

In terms of biological role, this protein is located at the 30S-50S ribosomal subunit interface and may play a role in the structure and function of the aminoacyl-tRNA binding site. This Geotalea daltonii (strain DSM 22248 / JCM 15807 / FRC-32) (Geobacter daltonii) protein is Large ribosomal subunit protein bL19.